We begin with the raw amino-acid sequence, 554 residues long: Malate synthase 1 (554 aa).

The Proton acceptor role is filled by Arg-177. Asp-457 acts as the Proton donor in catalysis. Positions 552-554 (SKL) match the SKL peroxisome targeting motif motif.

It belongs to the malate synthase family. Interacts with PEX9.

Its subcellular location is the peroxisome matrix. The catalysed reaction is glyoxylate + acetyl-CoA + H2O = (S)-malate + CoA + H(+). Its pathway is carbohydrate metabolism; glyoxylate cycle; (S)-malate from isocitrate: step 2/2. Malate synthase which takes part in the glyoxylate cycle. MLS1 activity is essential for cells to grow on oleic acid as a sole carbon source. Two steps of the glyoxylate cycle take place in the cytosol, the splitting of isocitrate into succinate and glyoxylate, and the dehydrogenation of malate to oxaloacetate. However, the formation of malate from glyoxylate and acetyl-CoA undertaken MLS1, occurs in the peroxisomes when cells are grown on oleic acid. The source of acetyl-CoA being either peroxisomal when breaking down fatty acids, or cytosolic when extra-cellular two-carbon substrates are used, therefore, although not strictly essential, the peroxisomal localization of MLS1 appears to be advantageous for cells growing on oleic acid, in that acetyl-CoA production and utilization are thereby intimately compartmentalized together to increase efficiency. This chain is Malate synthase 1, found in Saccharomyces cerevisiae (strain YJM789) (Baker's yeast).